Reading from the N-terminus, the 402-residue chain is Beta sliding clamp (402 aa).

Belongs to the beta sliding clamp family. As to quaternary structure, forms a ring-shaped head-to-tail homodimer around DNA which binds and tethers DNA polymerases and other proteins to the DNA. The DNA replisome complex has a single clamp-loading complex (3 tau and 1 each of delta, delta', psi and chi subunits) which binds 3 Pol III cores (1 core on the leading strand and 2 on the lagging strand) each with a beta sliding clamp dimer. Additional proteins in the replisome are other copies of gamma, psi and chi, Ssb, DNA helicase and RNA primase.

The protein resides in the cytoplasm. In terms of biological role, confers DNA tethering and processivity to DNA polymerases and other proteins. Acts as a clamp, forming a ring around DNA (a reaction catalyzed by the clamp-loading complex) which diffuses in an ATP-independent manner freely and bidirectionally along dsDNA. Initially characterized for its ability to contact the catalytic subunit of DNA polymerase III (Pol III), a complex, multichain enzyme responsible for most of the replicative synthesis in bacteria; Pol III exhibits 3'-5' exonuclease proofreading activity. The beta chain is required for initiation of replication as well as for processivity of DNA replication. This is Beta sliding clamp (dnaN) from Mycobacterium bovis (strain ATCC BAA-935 / AF2122/97).